Reading from the N-terminus, the 176-residue chain is ATP-dependent protease subunit HslV (176 aa).

Threonine 2 is an active-site residue. Na(+)-binding residues include glycine 157, cysteine 160, and threonine 163.

The protein belongs to the peptidase T1B family. HslV subfamily. As to quaternary structure, a double ring-shaped homohexamer of HslV is capped on each side by a ring-shaped HslU homohexamer. The assembly of the HslU/HslV complex is dependent on binding of ATP.

It localises to the cytoplasm. It catalyses the reaction ATP-dependent cleavage of peptide bonds with broad specificity.. With respect to regulation, allosterically activated by HslU binding. Its function is as follows. Protease subunit of a proteasome-like degradation complex believed to be a general protein degrading machinery. In Pseudomonas fluorescens (strain SBW25), this protein is ATP-dependent protease subunit HslV.